Here is a 139-residue protein sequence, read N- to C-terminus: Thioredoxin H-type (139 aa).

One can recognise a Thioredoxin domain in the interval 20–132 (ELAGGNVHLI…LHKKITAILD (113 aa)). Active-site nucleophile residues include C58 and C61. C58 and C61 are disulfide-bonded.

The protein resides in the cytoplasm. Functionally, participates in various redox reactions through the reversible oxidation of the active center dithiol to a disulfide. The H form is known to activate a number of cytosolic enzymes. This is Thioredoxin H-type from Populus jackii (Balm of Gilead).